The sequence spans 365 residues: Chaperone protein DnaJ (365 aa).

The 67-residue stretch at 5-71 folds into the J domain; it reads DFYEILGIAK…QKRQAYDQFG (67 aa). The CR-type zinc finger occupies 128–206; sequence GTTVKIRIPK…CHGKGVVHKQ (79 aa). Positions 141, 144, 158, 161, 180, 183, 194, and 197 each coordinate Zn(2+). CXXCXGXG motif repeat units follow at residues 141–148, 158–165, 180–187, and 194–201; these read CDTCSGTG, CLTCGGAG, CNACSGTG, and CNNCHGKG.

Belongs to the DnaJ family. In terms of assembly, homodimer. Zn(2+) serves as cofactor.

Its subcellular location is the cytoplasm. Participates actively in the response to hyperosmotic and heat shock by preventing the aggregation of stress-denatured proteins and by disaggregating proteins, also in an autonomous, DnaK-independent fashion. Unfolded proteins bind initially to DnaJ; upon interaction with the DnaJ-bound protein, DnaK hydrolyzes its bound ATP, resulting in the formation of a stable complex. GrpE releases ADP from DnaK; ATP binding to DnaK triggers the release of the substrate protein, thus completing the reaction cycle. Several rounds of ATP-dependent interactions between DnaJ, DnaK and GrpE are required for fully efficient folding. Also involved, together with DnaK and GrpE, in the DNA replication of plasmids through activation of initiation proteins. The protein is Chaperone protein DnaJ of Vesicomyosocius okutanii subsp. Calyptogena okutanii (strain HA).